A 149-amino-acid chain; its full sequence is SsrA-binding protein (149 aa).

This sequence belongs to the SmpB family.

It is found in the cytoplasm. Functionally, required for rescue of stalled ribosomes mediated by trans-translation. Binds to transfer-messenger RNA (tmRNA), required for stable association of tmRNA with ribosomes. tmRNA and SmpB together mimic tRNA shape, replacing the anticodon stem-loop with SmpB. tmRNA is encoded by the ssrA gene; the 2 termini fold to resemble tRNA(Ala) and it encodes a 'tag peptide', a short internal open reading frame. During trans-translation Ala-aminoacylated tmRNA acts like a tRNA, entering the A-site of stalled ribosomes, displacing the stalled mRNA. The ribosome then switches to translate the ORF on the tmRNA; the nascent peptide is terminated with the 'tag peptide' encoded by the tmRNA and targeted for degradation. The ribosome is freed to recommence translation, which seems to be the essential function of trans-translation. This is SsrA-binding protein from Wolbachia sp. subsp. Brugia malayi (strain TRS).